The primary structure comprises 565 residues: Polycomb protein EED (565 aa).

WD repeat units lie at residues 89-133, 136-176, 185-224, and 240-278; these read DDGN…LYRT, GHGG…EKQP, GHSYDLLSVAFHDNGRYVLSAGHDQVINLWALPEFPNEHM, and IHNNLVDCVAFYGDLILSRACHEDTIVLWRIEGFSSDDP. The disordered stretch occupies residues 417–488; it reads VKKAPGAAGS…SASPDPDSPF (72 aa). A compositionally biased stretch (low complexity) spans 429 to 450; it reads GTAANGGHNNNNNNNNNNNNNN. A compositionally biased stretch (polar residues) spans 451-468; the sequence is HETGSQRSFSATNNLSNS. A WD 5 repeat occupies 519–559; it reads IDGAFVGRQVGWSPEGEWCVVVGNGNRALIYQRWGKERGLG.

It belongs to the WD repeat ESC family. In terms of assembly, component of the polycomb repressive complex 2 (PRC2) that consists of four core subunits icluding EZH2, EED, SUZ12, and RBBP4, among which EZH2 is the catalytic subunit and which minimally requires EED and SUZ12 for catalysis.

Its subcellular location is the nucleus. Functionally, component of the of the Polycomb Repressive Complex 2 (PRC2), a histone H3 lysine methyltransferase responsible for generating mono-, di-, and tri-methylation on Lys27 (H3K27me1, H3K27me2 and H3K27me3). The tri-methylated form is known to be critical in gene repression, and its proper placement is essential in defining repression patterns during development. EED is not a catalytic subunit but is required for the complex regulation of histone H3 lysine methylation by EZH2. This chain is Polycomb protein EED, found in Chaetomium thermophilum (strain DSM 1495 / CBS 144.50 / IMI 039719) (Thermochaetoides thermophila).